The following is a 960-amino-acid chain: MKIPNIGNVMNKFEILGVVGEGAYGVVLKCRHKETHEIVAIKKFKDSEENEEVKETTLRELKMLRTLKQENIVELKEAFRRRGKLYLVFEYVEKNMLELLEEMPNGVPPEKVKSYIYQLIKAIHWCHKNDIVHRDIKPENLLISHNDVLKLCDFGFARNLSEGNNANYTEYVATRWYRSPELLLGAPYGKSVDMWSVGCILGELSDGQPLFPGESEIDQLFTIQKVLGPLPSEQMKLFYSNPRFHGLRFPAVNHPQSLERRYLGILNSVLLDLMKNLLKLDPADRYLTEQCLNHPTFQTQRLLDRSPSRSAKRKPYHVESSTLSNRNQAGKSTALQSHHRSNSKDIQNLSVGLPRADEGLPANESFLNGNLAGASLSPLHTKTYQASSQPGSTSKDLTNNNIPHLLSPKEAKSKTEFDFNIDPKPSEGPGTKYLKSNSRSQQNRHSFMESSQSKAGTLQPNEKQSRHSYIDTIPQSSRSPSYRTKAKSHGALSDSKSVSNLSEARAQIAEPSTSRYFPSSCLDLNSPTSPTPTRHSDTRTLLSPSGRNNRNEGTLDSRRTTTRHSKTMEELKLPEHMDSSHSHSLSAPHESFSYGLGYTSPFSSQQRPHRHSMYVTRDKVRAKGLDGSLSIGQGMAARANSLQLLSPQPGEQLPPEMTVARSSVKETSREGTSSFHTRQKSEGGVYHDPHSDDGTAPKENRHLYNDPVPRRVGSFYRVPSPRPDNSFHENNVSTRVSSLPSESSSGTNHSKRQPAFDPWKSPENISHSEQLKEKEKQGFFRSMKKKKKKSQTVPNSDSPDLLTLQKSIHSASTPSSRPKEWRPEKISDLQTQSQPLKSLRKLLHLSSASNHPASSDPRFQPLTAQQTKNSFSEIRIHPLSQASGGSSNIRQEPAPKGRPALQLPGQMDPGWHVSSVTRSATEGPSYSEQLGAKSGPNGHPYNRTNRSRMPNLNDLKETAL.

Residues 13–297 (FEILGVVGEG…TEQCLNHPTF (285 aa)) form the Protein kinase domain. ATP contacts are provided by residues 19-27 (VGEGAYGVV) and K42. The active-site Proton acceptor is D135. 4 disordered regions span residues 300-349 (QRLL…IQNL), 382-566 (KTYQ…RHSK), 646-834 (SPQP…TQSQ), and 848-960 (ASNH…ETAL). Polar residues-rich tracts occupy residues 319 to 336 (ESST…TALQ) and 382 to 402 (KTYQ…NNNI). The residue at position 407 (S407) is a Phosphoserine. Positions 407 to 417 (SPKEAKSKTEF) are enriched in basic and acidic residues. 3 stretches are compositionally biased toward polar residues: residues 434–462 (LKSN…QPNE), 473–482 (IPQSSRSPSY), and 510–548 (EPST…SGRN). Position 479 is a phosphoserine (S479). Composition is skewed to basic and acidic residues over residues 549-559 (NRNEGTLDSRR) and 679-704 (QKSE…RHLY). Residue S720 is modified to Phosphoserine. The segment covering 728 to 748 (HENNVSTRVSSLPSESSSGTN) has biased composition (polar residues). Phosphoserine is present on S761. The segment covering 769–778 (EQLKEKEKQG) has biased composition (basic and acidic residues). The segment covering 791 to 816 (QTVPNSDSPDLLTLQKSIHSASTPSS) has biased composition (polar residues). A compositionally biased stretch (basic and acidic residues) spans 817–827 (RPKEWRPEKIS). Polar residues-rich tracts occupy residues 862–872 (LTAQQTKNSFS), 880–890 (SQASGGSSNIR), and 914–928 (SSVT…SYSE).

This sequence belongs to the protein kinase superfamily. CMGC Ser/Thr protein kinase family. CDC2/CDKX subfamily. Interacts with MECP2. In terms of processing, autophosphorylated. Expressed in brain, lung, kidney, prostate, ovary, placenta, pancreas and testis. As to expression, predominant transcript in brain.

It localises to the nucleus. The protein resides in the cytoplasm. The protein localises to the cytoskeleton. It is found in the cilium basal body. Its subcellular location is the microtubule organizing center. It localises to the centrosome. The enzyme catalyses L-seryl-[protein] + ATP = O-phospho-L-seryl-[protein] + ADP + H(+). The catalysed reaction is L-threonyl-[protein] + ATP = O-phospho-L-threonyl-[protein] + ADP + H(+). Functionally, mediates phosphorylation of MECP2. May regulate ciliogenesis. The polypeptide is Cyclin-dependent kinase-like 5 (Homo sapiens (Human)).